Here is a 153-residue protein sequence, read N- to C-terminus: Ribonuclease 2 (153 aa).

It belongs to the BetVI family.

Its subcellular location is the cytoplasm. Its function is as follows. Catalyzes the two-stage endonucleolytic cleavage to 3'-phosphomononucleotides and 3'-phosphooligonucleotides with 2',3'-cyclic phosphate intermediates. This is Ribonuclease 2 from Panax ginseng (Korean ginseng).